Consider the following 1093-residue polypeptide: Phosphorylase b kinase regulatory subunit beta (1093 aa).

Ala-2 carries the N-acetylalanine modification. Phosphoserine is present on Ala-4. The interval 7 to 29 is calmodulin-binding; it reads LTAEVSWKVLERRARTKRSGSVY. Residue Ser-12 is modified to Phosphoserine; by autocatalysis. Residues Ser-27 and Ser-701 each carry the phosphoserine modification. Residues 689-716 form a disordered region; the sequence is EPPKHSKVKRQSSTPSAPELGQQPDVNI. 2 calmodulin-binding regions span residues 768-795 and 920-951; these read RVYR…FSSS and NGRC…ILER. Cys-1090 is lipidated: S-farnesyl cysteine.

This sequence belongs to the phosphorylase b kinase regulatory chain family. In terms of assembly, hexadecamer of 4 heterotetramers, each composed of alpha, beta, gamma, and delta subunits. Alpha (PHKA1 or PHKA2) and beta (PHKB) are regulatory subunits, gamma (PHKG1 or PHKG2) is the catalytic subunit, and delta is calmodulin. Post-translationally, ser-701 is probably phosphorylated by PKA. In terms of processing, although the final Cys may be farnesylated, the terminal tripeptide is probably not removed, and the C-terminus is not methylated.

It is found in the cell membrane. It functions in the pathway glycan biosynthesis; glycogen metabolism. With respect to regulation, by phosphorylation of various serine residues. Its function is as follows. Phosphorylase b kinase catalyzes the phosphorylation of serine in certain substrates, including troponin I. The beta chain acts as a regulatory unit and modulates the activity of the holoenzyme in response to phosphorylation. The sequence is that of Phosphorylase b kinase regulatory subunit beta (PHKB) from Homo sapiens (Human).